Reading from the N-terminus, the 767-residue chain is Transient receptor potential cation channel subfamily V member 6 (767 aa).

The tract at residues 1–33 is disordered; that stretch reads MGPLQREGRPALGDANVAPGSSPGGVWHQPQPP. Over 1–366 the chain is Cytoplasmic; that stretch reads MGPLQREGRP…SLKWKRYGRP (366 aa). ANK repeat units follow at residues 84–114, 118–147, and 156–185; these read IWES…EVHQ, MGET…ELVF, and EGQT…SVSA. The interaction with calmodulin stretch occupies residues 133–143; that stretch reads EAAMVLMEAAP. Residues tyrosine 201 and tyrosine 202 each carry the phosphotyrosine; by SRC modification. ANK repeat units lie at residues 202–231, 235–276, and 278–307; these read YGEH…DIRA, LGNT…LVPN, and QGLT…HIQW. A helical transmembrane segment spans residues 367 to 387; sequence YFCVLGAIYVLYIICFTMCCV. The Extracellular segment spans residues 388–424; it reads YRPLKPRITNRTNPRDNTLLQQKLLQEAYVTPKDDLR. Asparagine 397 carries an N-linked (GlcNAc...) asparagine glycan. Residues 425 to 447 traverse the membrane as a helical segment; that stretch reads LVGELVSIVGAVIILLVEIPDIF. At 448 to 462 the chain is on the cytoplasmic side; the sequence is RLGVTRFFGQTILGG. The helical transmembrane segment at 463-482 threads the bilayer; that stretch reads PFHVIIVTYAFMVLVTMVMR. At 483 to 488 the chain is on the extracellular side; that stretch reads LTNSDG. The chain crosses the membrane as a helical span at residues 489 to 508; it reads EVVPMSFALVLGWCNVMYFA. At 509–528 the chain is on the cytoplasmic side; that stretch reads RGFQMLGPFTIMIQKMIFGD. Residues 529–551 form a helical membrane-spanning segment; sequence LMRFCWLMAVVILGFASAFYIIF. At 552–564 the chain is on the extracellular side; that stretch reads QTEDPDELGHFYD. The segment at residues 565–584 is an intramembrane region (pore-forming); sequence YPMALFSTFELFLTIIDGPA. The Selectivity filter signature appears at 580–584; it reads IDGPA. Residue aspartate 581 participates in Ca(2+) binding. The Extracellular segment spans residues 585–595; it reads NYDVDLPFMYS. The chain crosses the membrane as a helical span at residues 596–616; sequence ITYAAFAIIATLLMLNLLIAM. Residues 617 to 767 lie on the Cytoplasmic side of the membrane; that stretch reads MGDTHWRVAH…EDGEGWEYQI (151 aa). An interaction with S100A10 region spans residues 637 to 641; sequence VATTV. Residues 689-707 are interaction with calmodulin; that stretch reads AFQQQDDLYSEDLEKDSGE.

The protein belongs to the transient receptor (TC 1.A.4) family. TrpV subfamily. TRPV6 sub-subfamily. Homotetramer. Probably also forms heterotetramers with TRPV5. Interacts with TRPV5. Interacts with S100A10 and probably with the ANAX2-S100A10 heterotetramer. The interaction with S100A10 is required for the trafficking to the plasma membrane. Interacts with calmodulin. Interacts with BSPRY. Interacts with TCAF1 and TCAF2. Post-translationally, glycosylated. Phosphorylation at Tyr-201 and Tyr-202 by SRC leads to an increased calcium influx through the channel. Probably dephosphorylated at these sites by PTPN1. Expressed in duodenum, proximal jejunum, cecum, and colon.

The protein resides in the cell membrane. It catalyses the reaction Ca(2+)(in) = Ca(2+)(out). Its function is as follows. Calcium selective cation channel that mediates Ca(2+) uptake in various tissues, including the intestine. Important for normal Ca(2+) ion homeostasis in the body, including bone and skin. The channel is activated by low internal calcium level, probably including intracellular calcium store depletion, and the current exhibits an inward rectification. Inactivation includes both a rapid Ca(2+)-dependent and a slower Ca(2+)-calmodulin-dependent mechanism; the latter may be regulated by phosphorylation. In vitro, is slowly inhibited by Mg(2+) in a voltage-independent manner. Heteromeric assembly with TRPV5 seems to modify channel properties. TRPV5-TRPV6 heteromultimeric concatemers exhibit voltage-dependent gating. This Rattus norvegicus (Rat) protein is Transient receptor potential cation channel subfamily V member 6 (Trpv6).